We begin with the raw amino-acid sequence, 491 residues long: Cytochrome P450 2B3 (491 aa).

Residue Cys-436 coordinates heme.

It belongs to the cytochrome P450 family. Heme serves as cofactor. In terms of tissue distribution, liver. Not found in the lung, kidney and prostate.

The protein resides in the endoplasmic reticulum membrane. It localises to the microsome membrane. The enzyme catalyses an organic molecule + reduced [NADPH--hemoprotein reductase] + O2 = an alcohol + oxidized [NADPH--hemoprotein reductase] + H2O + H(+). Its function is as follows. Cytochromes P450 are a group of heme-thiolate monooxygenases. In liver microsomes, this enzyme is involved in an NADPH-dependent electron transport pathway. It oxidizes a variety of structurally unrelated compounds, including steroids, fatty acids, and xenobiotics. The sequence is that of Cytochrome P450 2B3 (Cyp2b3) from Rattus norvegicus (Rat).